The sequence spans 144 residues: Superoxide dismutase [Mn], mitochondrial (144 aa).

The Mn(2+) site is built by His-10, His-58, and Asp-143.

The protein belongs to the iron/manganese superoxide dismutase family. Homotetramer. The cofactor is Mn(2+).

It localises to the mitochondrion matrix. It catalyses the reaction 2 superoxide + 2 H(+) = H2O2 + O2. Its function is as follows. Destroys superoxide anion radicals which are normally produced within the cells and which are toxic to biological systems. The protein is Superoxide dismutase [Mn], mitochondrial of Petromyzon marinus (Sea lamprey).